A 317-amino-acid polypeptide reads, in one-letter code: Transaldolase (317 aa).

Lys-126 (schiff-base intermediate with substrate) is an active-site residue.

This sequence belongs to the transaldolase family. Type 1 subfamily. Homodimer.

The protein localises to the cytoplasm. The enzyme catalyses D-sedoheptulose 7-phosphate + D-glyceraldehyde 3-phosphate = D-erythrose 4-phosphate + beta-D-fructose 6-phosphate. It participates in carbohydrate degradation; pentose phosphate pathway; D-glyceraldehyde 3-phosphate and beta-D-fructose 6-phosphate from D-ribose 5-phosphate and D-xylulose 5-phosphate (non-oxidative stage): step 2/3. In terms of biological role, transaldolase is important for the balance of metabolites in the pentose-phosphate pathway. The polypeptide is Transaldolase (Burkholderia cenocepacia (strain ATCC BAA-245 / DSM 16553 / LMG 16656 / NCTC 13227 / J2315 / CF5610) (Burkholderia cepacia (strain J2315))).